We begin with the raw amino-acid sequence, 451 residues long: MNTRVLTGITTTGTPHLGNYAGAIRPAIQASTQPGVDAFFFLADYHALIKCDDPARVARSRLELAATWLAAGLDPERVTFYRQSDIPEITELCWLLTCVTPKGLMNRAHAYKASVDQNAAKGVEPDDGVTMGLFSYPVLMAADILLFNANQVPVGRDQVQHLEMARDIAQRFNHLYGREFFVLPEVVIAEEVATLPGLDGRKMSKSYNNTIPLFEGGAAGLRNATQRIVTDSRLPGEPKDAEASHLYMLYRAFSTQQESMAFRRQLEEGMGWGDAKQALYERLERDLAPMRERYVELISNPGLIEDILQVGAAKARKLAQPLVRTLRDAVGLGVLQPAAAKAAQPARKAAKDARFVSFRDEDGSFRFRLLAADGEELLCSVPFANPKEAGALMRRLQDEAPEQALRGHDDVSYAAWLDGKEVAYGPQAADAGARDALLAKAREALAQLAAA.

ATP contacts are provided by residues 10-12 and 18-19; these read TTT and GN. Residues 11-19 carry the 'HIGH' region motif; that stretch reads TTGTPHLGN. An L-tryptophan-binding site is contributed by D143. ATP contacts are provided by residues 155 to 157, L195, and 202 to 206; these read GRD and KMSKS. The 'KMSKS' region motif lies at 202–206; the sequence is KMSKS.

The protein belongs to the class-I aminoacyl-tRNA synthetase family. In terms of assembly, homodimer.

It is found in the cytoplasm. It catalyses the reaction tRNA(Trp) + L-tryptophan + ATP = L-tryptophyl-tRNA(Trp) + AMP + diphosphate + H(+). Its function is as follows. Catalyzes the attachment of tryptophan to tRNA(Trp). This Bordetella pertussis (strain Tohama I / ATCC BAA-589 / NCTC 13251) protein is Tryptophan--tRNA ligase.